Consider the following 524-residue polypeptide: Alkaline phosphatase, tissue-nonspecific isozyme (524 aa).

The first 17 residues, M1–S17, serve as a signal peptide directing secretion. Position 60 (D60) interacts with Mg(2+). 2 residues coordinate Zn(2+): D60 and S110. Catalysis depends on S110, which acts as the Phosphoserine intermediate. Phosphoserine is present on S110. C139 and C201 are oxidised to a cystine. A glycan (N-linked (GlcNAc...) asparagine) is linked at N140. T173 lines the Mg(2+) pocket. N-linked (GlcNAc...) asparagine glycosylation occurs at N230. Residue E235 coordinates Ca(2+). N271 carries N-linked (GlcNAc...) asparagine glycosylation. Ca(2+)-binding residues include F290 and E291. N303 carries N-linked (GlcNAc...) asparagine glycosylation. D306 serves as a coordination point for Ca(2+). E332 contributes to the Mg(2+) binding site. Positions 337, 341, 378, and 379 each coordinate Zn(2+). A glycan (N-linked (GlcNAc...) asparagine) is linked at N430. H454 contributes to the Zn(2+) binding site. A disulfide bridge connects residues C489 and C497. Residue S499 is the site of GPI-anchor amidated serine attachment. Residues A500–F524 constitute a propeptide, removed in mature form.

Belongs to the alkaline phosphatase family. In terms of assembly, homodimer. The cofactor is Mg(2+). Zn(2+) is required as a cofactor. Requires Ca(2+) as cofactor. N-glycosylated.

It localises to the cell membrane. The protein resides in the extracellular vesicle membrane. The protein localises to the mitochondrion membrane. It is found in the mitochondrion intermembrane space. The enzyme catalyses a phosphate monoester + H2O = an alcohol + phosphate. It catalyses the reaction diphosphate + H2O = 2 phosphate + H(+). It carries out the reaction pyridoxal 5'-phosphate + H2O = pyridoxal + phosphate. The catalysed reaction is phosphoethanolamine + H2O = ethanolamine + phosphate. The enzyme catalyses N-phosphocreatine + H2O = creatine + phosphate. It catalyses the reaction ATP + H2O = ADP + phosphate + H(+). It carries out the reaction ADP + H2O = AMP + phosphate + H(+). The catalysed reaction is AMP + H2O = adenosine + phosphate. With respect to regulation, phosphatase activity is specifically inhibited by 5-((5-chloro-2-methoxyphenyl)sulfonamido)nicotinamide (SBI-425). Its function is as follows. Alkaline phosphatase that metabolizes various phosphate compounds and plays a key role in skeletal mineralization and adaptive thermogenesis. Has broad substrate specificity and can hydrolyze a considerable variety of compounds: however, only a few substrates, such as diphosphate (inorganic pyrophosphate; PPi), pyridoxal 5'-phosphate (PLP) and N-phosphocreatine are natural substrates. Plays an essential role in skeletal and dental mineralization via its ability to hydrolyze extracellular diphosphate, a potent mineralization inhibitor, to phosphate: it thereby promotes hydroxyapatite crystal formation and increases inorganic phosphate concentration. Acts in a non-redundant manner with PHOSPHO1 in skeletal mineralization: while PHOSPHO1 mediates the initiation of hydroxyapatite crystallization in the matrix vesicles (MVs), ALPL/TNAP catalyzes the spread of hydroxyapatite crystallization in the extracellular matrix. Also promotes dephosphorylation of osteopontin (SSP1), an inhibitor of hydroxyapatite crystallization in its phosphorylated state; it is however unclear whether ALPL/TNAP mediates SSP1 dephosphorylation via a direct or indirect manner. Catalyzes dephosphorylation of PLP to pyridoxal (PL), the transportable form of vitamin B6, in order to provide a sufficient amount of PLP in the brain, an essential cofactor for enzymes catalyzing the synthesis of diverse neurotransmitters. Additionally, also able to mediate ATP degradation in a stepwise manner to adenosine, thereby regulating the availability of ligands for purinergic receptors. Also capable of dephosphorylating microbial products, such as lipopolysaccharides (LPS) as well as other phosphorylated small-molecules, such as poly-inosine:cytosine (poly I:C). Acts as a key regulator of adaptive thermogenesis as part of the futile creatine cycle: localizes to the mitochondria of thermogenic fat cells and acts by mediating hydrolysis of N-phosphocreatine to initiate a futile cycle of creatine dephosphorylation and phosphorylation. During the futile creatine cycle, creatine and N-phosphocreatine are in a futile cycle, which dissipates the high energy charge of N-phosphocreatine as heat without performing any mechanical or chemical work. This Bos taurus (Bovine) protein is Alkaline phosphatase, tissue-nonspecific isozyme (ALPL).